The primary structure comprises 722 residues: Polyribonucleotide nucleotidyltransferase (722 aa).

Mg(2+) is bound by residues D495 and D501. The KH domain occupies 562–621 (PRLLSFRIDPELIGTVIGPGGRTIKGITERTNTKIDIEDGGIVTIASHDGVAAEEAQKII). Residues 631 to 699 (GEVFTGSITR…NRGRINLTLR (69 aa)) form the S1 motif domain.

It belongs to the polyribonucleotide nucleotidyltransferase family. Mg(2+) is required as a cofactor.

The protein resides in the cytoplasm. The enzyme catalyses RNA(n+1) + phosphate = RNA(n) + a ribonucleoside 5'-diphosphate. In terms of biological role, involved in mRNA degradation. Catalyzes the phosphorolysis of single-stranded polyribonucleotides processively in the 3'- to 5'-direction. This Prochlorococcus marinus (strain SARG / CCMP1375 / SS120) protein is Polyribonucleotide nucleotidyltransferase.